Consider the following 830-residue polypeptide: Penicillin-binding protein 1A (830 aa).

The Cytoplasmic segment spans residues 1-18 (MGKKKKKRKSSAFKIILN). A helical; Signal-anchor for type II membrane protein transmembrane segment spans residues 19-39 (VFLSIFLVAGVAFGGIVFAMI). Residues 40–830 (KTAPPLNVQQ…QNHEDNKNKQ (791 aa)) are Extracellular-facing. Residues 57-229 (SILYDDKGQY…PSVYYPYSSA (173 aa)) are transglycosylase. The active-site Proton donor; for transglycosylase activity is Glu96. The interval 357–641 (ASAVIMDYHN…AARLWGDIMK (285 aa)) is transpeptidase. The active-site Acyl-ester intermediate; for transpeptidase activity is Ser398. Residues 754 to 830 (GGSLPPTEEK…QNHEDNKNKQ (77 aa)) form a disordered region. The span at 760 to 786 (TEEKNNSNTRDKNKDKNKNKNKDKNPS) shows a compositional bias: basic and acidic residues. Residues 787–820 (QDKPNNNNNDNNSNNNNNNNDNNNNTKPPENDSN) show a composition bias toward low complexity. Residues 821–830 (QNHEDNKNKQ) are compositionally biased toward basic and acidic residues.

It in the N-terminal section; belongs to the glycosyltransferase 51 family. The protein in the C-terminal section; belongs to the transpeptidase family.

The protein localises to the cell membrane. It catalyses the reaction [GlcNAc-(1-&gt;4)-Mur2Ac(oyl-L-Ala-gamma-D-Glu-L-Lys-D-Ala-D-Ala)](n)-di-trans,octa-cis-undecaprenyl diphosphate + beta-D-GlcNAc-(1-&gt;4)-Mur2Ac(oyl-L-Ala-gamma-D-Glu-L-Lys-D-Ala-D-Ala)-di-trans,octa-cis-undecaprenyl diphosphate = [GlcNAc-(1-&gt;4)-Mur2Ac(oyl-L-Ala-gamma-D-Glu-L-Lys-D-Ala-D-Ala)](n+1)-di-trans,octa-cis-undecaprenyl diphosphate + di-trans,octa-cis-undecaprenyl diphosphate + H(+). The enzyme catalyses Preferential cleavage: (Ac)2-L-Lys-D-Ala-|-D-Ala. Also transpeptidation of peptidyl-alanyl moieties that are N-acyl substituents of D-alanine.. It functions in the pathway cell wall biogenesis; peptidoglycan biosynthesis. Its function is as follows. Cell wall formation. Synthesis of cross-linked peptidoglycan from the lipid intermediates. The enzyme has a penicillin-insensitive transglycosylase N-terminal domain (formation of linear glycan strands) and a penicillin-sensitive transpeptidase C-terminal domain (cross-linking of the peptide subunits). In Clostridium botulinum (strain Hall / ATCC 3502 / NCTC 13319 / Type A), this protein is Penicillin-binding protein 1A (pbpA).